Here is a 332-residue protein sequence, read N- to C-terminus: Multiple virulence factor regulator MvfR (332 aa).

Residues 4-61 (HNLNHVNMFLQVIASGSISSAARILRKSHTAVSSAVSNLEIDLCVELVRRDGYKVEPT) form the HTH lysR-type domain. Positions 21-40 (ISSAARILRKSHTAVSSAVS) form a DNA-binding region, H-T-H motif.

This sequence belongs to the LysR transcriptional regulatory family. Forms homooligomers.

The protein resides in the cell inner membrane. Its subcellular location is the secreted. With respect to regulation, both 3,4-dihydroxy-2-heptylquinoline (PQS) and its precursor 4-hydroxy-2-heptylquinoline (HHQ) function as ligands and promote MvfR DNA-binding activity leading to transcriptional activation. Its function is as follows. Transcription regulator that plays a critical role in virulence by positively regulating the expression of multiple quorum sensing (QS)-regulated virulence factors, genes involved in protein secretion, translation, response to oxidative stress and the phnAB operon. At the stationary phase, negatively autoregulates its function through cleavage and translocation to the extracellular space. The sequence is that of Multiple virulence factor regulator MvfR from Pseudomonas aeruginosa (strain ATCC 15692 / DSM 22644 / CIP 104116 / JCM 14847 / LMG 12228 / 1C / PRS 101 / PAO1).